Reading from the N-terminus, the 271-residue chain is MAAEEPQQQKQEPLGSDSEGVNCLAYDEAIMAQQDRIQQEIAVQNPLVSERLELSVLYKEYAEDDNIYQQKIKDLHKKYSYIRKTRPDGNCFYRAFGFSHLEALLDDSKELQRFKAVSAKSKEDLVSQGFTEFTIEDFHNTFMDLIEQVEKQTSVADLLASFNDQSTSDYLVVYLRLLTSGYLQRESKFFEHFIEGGRTVKEFCQQEVEPMCKESDHIHIIALAQALSVSIQVEYMDRGEGGTTNPHVFPEGSEPKVYLLYRPGHYDILYK.

The residue at position 2 (Ala-2) is an N-acetylalanine. Ser-16 carries the phosphoserine modification. Position 26 is a phosphotyrosine (Tyr-26). The 192-residue stretch at 80–271 (SYIRKTRPDG…RPGHYDILYK (192 aa)) folds into the OTU domain. Residue Asp-88 is part of the active site. Catalysis depends on Cys-91, which acts as the Nucleophile. Ubiquitin-conjugating enzyme E2 binding stretches follow at residues 130–138 (FTEFTIEDF) and 169–177 (DYLVVYLRL). Residues 189 to 195 (FFEHFIE) are free ubiquitin binding. The segment at 206–213 (QEVEPMCK) is ubiquitin-conjugating enzyme E2 binding. Free ubiquitin binding regions lie at residues 214–221 (ESDHIHII) and 245–251 (NPHVFPE). His-265 is a catalytic residue.

Belongs to the peptidase C65 family. In terms of assembly, interacts with RNF128. Forms a ternary complex with RNF128 and USP8. Interacts with FUS and RACK1. Interacts with UBE2D1/UBCH5A, UBE2W/UBC16 and UBE2N/UBC13. In terms of processing, phosphorylation at Tyr-26 by SRC and SRMS promotes deubiquitination of RPTOR via a non-catalytic process.

It localises to the cytoplasm. It catalyses the reaction Thiol-dependent hydrolysis of ester, thioester, amide, peptide and isopeptide bonds formed by the C-terminal Gly of ubiquitin (a 76-residue protein attached to proteins as an intracellular targeting signal).. With respect to regulation, by free ubiquitin: binding of free ubiquitin triggers conformational changes in the OTU domain and formation of a ubiquitin-binding helix in the N-terminus, promoting binding of the conjugated donor ubiquitin in UBE2N/UBC13 to OTUB1. In terms of biological role, hydrolase that can specifically remove compared to 'Lys-48'-linked conjugated ubiquitin from proteins and plays an important regulatory role at the level of protein turnover by preventing degradation. Regulator of T-cell anergy, a phenomenon that occurs when T-cells are rendered unresponsive to antigen rechallenge and no longer respond to their cognate antigen. Acts via its interaction with RNF128/GRAIL. Surprisingly, it regulates RNF128-mediated ubiquitination, but does not deubiquitinate polyubiquitinated RNF128. Deubiquitinates estrogen receptor alpha (ESR1). Mediates deubiquitination of 'Lys-48'-linked polyubiquitin chains, but not 'Lys-63'-linked polyubiquitin chains. Not able to cleave di-ubiquitin. Also capable of removing NEDD8 from NEDD8 conjugates, but with a much lower preference compared to 'Lys-48'-linked ubiquitin. Its function is as follows. Plays a key non-catalytic role in DNA repair regulation by inhibiting activity of RNF168, an E3 ubiquitin-protein ligase that promotes accumulation of 'Lys-63'-linked histone H2A and H2AX at DNA damage sites. Inhibits RNF168 independently of ubiquitin thioesterase activity by binding and inhibiting UBE2N/UBC13, the E2 partner of RNF168, thereby limiting spreading of 'Lys-63'-linked histone H2A and H2AX marks. Inhibition occurs by binding to free ubiquitin: free ubiquitin acts as an allosteric regulator that increases affinity for UBE2N/UBC13 and disrupts interaction with UBE2V1. The OTUB1-UBE2N/UBC13-free ubiquitin complex adopts a configuration that mimics a cleaved 'Lys48'-linked di-ubiquitin chain. Acts as a regulator of mTORC1 and mTORC2 complexes. When phosphorylated at Tyr-26, acts as an activator of the mTORC1 complex by mediating deubiquitination of RPTOR via a non-catalytic process: acts by binding and inhibiting the activity of the ubiquitin-conjugating enzyme E2 (UBE2D1/UBCH5A, UBE2W/UBC16 and UBE2N/UBC13), thereby preventing ubiquitination of RPTOR. Can also act as an inhibitor of the mTORC1 and mTORC2 complexes in response to amino acids by mediating non-catalytic deubiquitination of DEPTOR. This chain is Ubiquitin thioesterase OTUB1 (Otub1), found in Mus musculus (Mouse).